The chain runs to 736 residues: 1,4-alpha-glucan branching enzyme GlgB (736 aa).

The active-site Nucleophile is the Asp-415. The Proton donor role is filled by Glu-470.

It belongs to the glycosyl hydrolase 13 family. GlgB subfamily. As to quaternary structure, monomer.

The catalysed reaction is Transfers a segment of a (1-&gt;4)-alpha-D-glucan chain to a primary hydroxy group in a similar glucan chain.. It functions in the pathway glycan biosynthesis; glycogen biosynthesis. Functionally, catalyzes the formation of the alpha-1,6-glucosidic linkages in glycogen by scission of a 1,4-alpha-linked oligosaccharide from growing alpha-1,4-glucan chains and the subsequent attachment of the oligosaccharide to the alpha-1,6 position. In Burkholderia orbicola (strain AU 1054), this protein is 1,4-alpha-glucan branching enzyme GlgB.